We begin with the raw amino-acid sequence, 890 residues long: Translation initiation factor IF-2 (890 aa).

2 disordered regions span residues 31 to 164 and 189 to 266; these read KLAQ…PAEP and FKAP…ESLK. Basic and acidic residues predominate over residues 42-54; sequence SSSEKPSAKEKSV. Residues 55–72 are compositionally biased toward low complexity; it reads KVALAATSTPTASAEQAS. Acidic residues predominate over residues 114-128; sequence PEPELEVVDEVCDES. Composition is skewed to basic and acidic residues over residues 149–163 and 242–266; these read PQEK…KPAE and PKRD…ESLK. The 170-residue stretch at 395–564 folds into the tr-type G domain; it reads IRSPIVAFMG…ALQAEVLELK (170 aa). Positions 404 to 411 are G1; it reads GHVDHGKT. Residue 404–411 coordinates GTP; that stretch reads GHVDHGKT. The segment at 429–433 is G2; the sequence is AITQH. The interval 450-453 is G3; the sequence is DTPG. GTP is bound by residues 450–454 and 504–507; these read DTPGH and NKCD. The tract at residues 504–507 is G4; that stretch reads NKCD. A G5 region spans residues 540 to 542; it reads SAK.

Belongs to the TRAFAC class translation factor GTPase superfamily. Classic translation factor GTPase family. IF-2 subfamily.

Its subcellular location is the cytoplasm. Its function is as follows. One of the essential components for the initiation of protein synthesis. Protects formylmethionyl-tRNA from spontaneous hydrolysis and promotes its binding to the 30S ribosomal subunits. Also involved in the hydrolysis of GTP during the formation of the 70S ribosomal complex. This is Translation initiation factor IF-2 (infB) from Chlamydia pneumoniae (Chlamydophila pneumoniae).